Here is a 719-residue protein sequence, read N- to C-terminus: MEKFLFYLFLIGIAVRAQICPKRCVCQILSPNLATLCAKKGLLFVPPNIDRRTVELRLADNFVTNIKRKDFANMTSLVDLTLSRNTISFITPHAFADLRNLRALHLNSNRLTKITNDMFSGLSNLHHLILNNNQLTLISSTAFDDVFALEELDLSYNNLETIPWDAVEKMVSLHTLSLDHNMIDNIPKGTFSHLHKMTRLDVTSNKLQKLPPDPLFQRAQVLATSGIISPSTFALSFGGNPLHCNCELLWLRRLSREDDLETCASPALLTGRYFWSIPEEEFLCEPPLITRHTHEMRVLEGQRATLRCKARGDPEPAIHWISPEGKLISNATRSLVYDNGTLDILITTVKDTGAFTCIASNPAGEATQTVDLHIIKLPHLLNSTNHIHEPDPGSSDISTSTKSGSNASSSNGDTKMSQDKIVVAEATSSTALLKFNFQRNIPGIRMFQIQYNGTYDDTLVYRMIPPTSKTFLVNNLASGTMYDLCVLAIYDDGITSLTATRVVGCIQFTTEQDYVRCHFMQSQFLGGTMIIIIGGIIVASVLVFIIILMIRYKVCNNNGQHKVTKVSNVYSQTNGAQMQGCSVTLPQSMSKQAMGHEENAQCCKVASDNAIQSSETCSSQDSSTTTSALPPTWTSSAPVSQKQKRKTGTKPSAEPQSEAVTNVESQNTNRNNSTALQLASCPPDSVTEGPTSQRAHTKPNALLTNVDQNVQETQRLESI.

Positions 1-17 (MEKFLFYLFLIGIAVRA) are cleaved as a signal peptide. An LRRNT domain is found at 18–51 (QICPKRCVCQILSPNLATLCAKKGLLFVPPNIDR). The Extracellular portion of the chain corresponds to 18–529 (QICPKRCVCQ…MQSQFLGGTM (512 aa)). LRR repeat units follow at residues 52–73 (RTVE…DFAN), 76–97 (SLVD…AFAD), 100–121 (NLRA…MFSG), 124–145 (NLHH…AFDD), 148–169 (ALEE…AVEK), 172–193 (SLHT…TFSH), and 196–217 (KMTR…PLFQ). Residue N73 is glycosylated (N-linked (GlcNAc...) asparagine). Positions 240–286 (NPLHCNCELLWLRRLSREDDLETCASPALLTGRYFWSIPEEEFLCEP) constitute an LRRCT domain. Positions 287 to 373 (PLITRHTHEM…GEATQTVDLH (87 aa)) constitute an Ig-like domain. The cysteines at positions 308 and 357 are disulfide-linked. N-linked (GlcNAc...) asparagine glycosylation is found at N330, N339, N382, N406, and N452. A disordered region spans residues 385–416 (NHIHEPDPGSSDISTSTKSGSNASSSNGDTKM). Low complexity predominate over residues 393-412 (GSSDISTSTKSGSNASSSNG). A Fibronectin type-III domain is found at 414-503 (TKMSQDKIVV…ITSLTATRVV (90 aa)). The helical transmembrane segment at 530 to 550 (IIIIGGIIVASVLVFIIILMI) threads the bilayer. The Cytoplasmic portion of the chain corresponds to 551–719 (RYKVCNNNGQ…VQETQRLESI (169 aa)). The segment covering 614 to 627 (SETCSSQDSSTTTS) has biased composition (low complexity). Residues 614-719 (SETCSSQDSS…VQETQRLESI (106 aa)) are disordered. Composition is skewed to polar residues over residues 628-641 (ALPP…PVSQ), 654-677 (EPQS…TALQ), and 702-713 (LLTNVDQNVQET).

It belongs to the LRFN family. Can form heteromeric complexes with LRFN1, LRFN2, LRFN3 and LFRN4. Able to form homomeric complexes across cell junctions, between adjacent cells. Does not interact with DLG1, DLG2 or DLG3. Does not interact with DLG4. In terms of processing, glycosylated. In terms of tissue distribution, predominantly expressed in the brain, with a weak, but broad expression in the cerebral cortex and diencephalic nuclei. Strongly expressed in both the pyramidal layer and the dentate gyrus of the hippocampus. Also detected in other parts of the central nervous system, including the olfactory bulb, pons, cerebellum, and medulla oblongata, as well as in the peripheral nervous system, such as the ganglia of cranial nerves and the dorsal root ganglion during gestation.

The protein resides in the membrane. Its function is as follows. Cell adhesion molecule that mediates homophilic cell-cell adhesion in a Ca(2+)-independent manner. Promotes neurite outgrowth in hippocampal neurons. The protein is Leucine-rich repeat and fibronectin type-III domain-containing protein 5 (Lrfn5) of Mus musculus (Mouse).